The primary structure comprises 234 residues: Opacity protein V28 (234 aa).

Ala-1 is a signal peptide.

This sequence belongs to the opacity porin family.

Its subcellular location is the cell outer membrane. Its function is as follows. Implicated in a number of adherence functions. OPA proteins are implicated in pathogenesis and are subject to phase variation. The protein is Opacity protein V28 of Neisseria gonorrhoeae.